A 136-amino-acid chain; its full sequence is UPF0216 protein PH0358 (136 aa).

It belongs to the UPF0216 family.

In Pyrococcus horikoshii (strain ATCC 700860 / DSM 12428 / JCM 9974 / NBRC 100139 / OT-3), this protein is UPF0216 protein PH0358.